The primary structure comprises 106 residues: Small ribosomal subunit protein uS10 (106 aa).

Belongs to the universal ribosomal protein uS10 family. As to quaternary structure, part of the 30S ribosomal subunit.

Functionally, involved in the binding of tRNA to the ribosomes. This chain is Small ribosomal subunit protein uS10, found in Caldicellulosiruptor saccharolyticus (strain ATCC 43494 / DSM 8903 / Tp8T 6331).